The primary structure comprises 577 residues: Optineurin (577 aa).

Disordered stretches follow at residues 1–32 and 101–143; these read MSHQ…HPNL and SHEN…KDQL. A coiled-coil region spans residues 38 to 170; that stretch reads EELLQQMKEL…VSELQLKLNS (133 aa). The tract at residues 58–209 is interaction with Rab8; it reads MKLNNQAMKG…GPTRTVSTGT (152 aa). The LIR signature appears at 176 to 181; sequence DSFVEI. Ser-177 carries the post-translational modification Phosphoserine; by TBK1. The span at 186-197 shows a compositional bias: basic and acidic residues; it reads GEAEGSVKEIKH. 2 disordered regions span residues 186 to 209 and 261 to 297; these read GEAE…STGT and VSDF…TVGS. At Ser-198 the chain carries Phosphoserine. The stretch at 239–508 forms a coiled coil; sequence CLREGNQKVE…LLKENDAFED (270 aa). Composition is skewed to basic and acidic residues over residues 261-274 and 281-292; these read VSDF…RSEI and STEKENDEEKGP. Position 342 is a phosphoserine (Ser-342). The segment at 411–577 is interaction with HD; the sequence is TRKESEKVDR…LQIHVMDCII (167 aa). The interval 412–520 is interaction with MYO6; sequence RKESEKVDRA…RQSLMEMQSR (109 aa). Residues 474–479 carry the UBAN motif; that stretch reads DFHAER. Position 526 is a phosphoserine (Ser-526). A CCHC NOA-type zinc finger spans residues 547–577; the sequence is QRNIPIHSCPKCGEVLPDIDTLQIHVMDCII. The Zn(2+) site is built by Cys-555, Cys-558, His-571, and Cys-575.

As to quaternary structure, self-associates. Interacts with HD. Interacts with GTF3A. Interacts with MYO6. Interacts (via UBAN) with ubiquitinated TFRC. Interacts with GTP-bound Rab8 (RAB8A and/or RAB8B). Interacts with TBC1D17. Interacts with TBK1. Interacts with TRAF3. Binds to linear ubiquitin chains. Interacts with LC3 family members MAP1LC3A, MAP1LC3B, GABARAP, GABARAPL1 and GABARAPL2; OPTN phosphorylation increases the association (at least with MAP1LC3B). Interacts with RAB12; the interaction may be indirect. Interacts with TBK1; this interaction leads to the Golgi localization of TBK1 and its subsequent activation. Interacts with palmitoyltransferase ZDHHC17/HIP14; the interaction does not lead to palmitoylation of OPTN. Interacts with CYLD. Interacts with TOM1; the interaction is indirect and is mediated by MYO6, which acts as a bridge between TOM1 and OPTN. Interacts with USP12; the interaction is independent of USP12 deubiquitinase activity and may be involved in regulation of autophagic flux. In terms of assembly, (Microbial infection) Interacts with E3 14.7 kDa protein of group C human adenovirus. Interacts with Bluetongue virus protein NS3. Post-translationally, phosphorylated by TBK1, leading to restrict bacterial proliferation in case of infection. Phosphorylation is induced by phorbol esters and decreases its half-time. In terms of tissue distribution, present in aqueous humor of the eye (at protein level). Expressed in the trabecular meshwork (at protein level). Expressed in nonpigmented ciliary epithelium (at protein level). Expressed at high levels in skeletal muscle, also detected in heart, brain, pancreas, kidney, placenta and liver. Expressed in dermal fibroblasts (at protein level).

Its subcellular location is the cytoplasm. The protein localises to the perinuclear region. The protein resides in the golgi apparatus. It localises to the trans-Golgi network. It is found in the cytoplasmic vesicle. Its subcellular location is the autophagosome. The protein localises to the recycling endosome. Plays an important role in the maintenance of the Golgi complex, in membrane trafficking, in exocytosis, through its interaction with myosin VI and Rab8. Links myosin VI to the Golgi complex and plays an important role in Golgi ribbon formation. Plays a role in the activation of innate immune response during viral infection. Mechanistically, recruits TBK1 at the Golgi apparatus, promoting its trans-phosphorylation after RLR or TLR3 stimulation. In turn, activated TBK1 phosphorylates its downstream partner IRF3 to produce IFN-beta/IFNB1. Plays a neuroprotective role in the eye and optic nerve. May act by regulating membrane trafficking and cellular morphogenesis via a complex that contains Rab8 and huntingtin (HD). Mediates the interaction of Rab8 with the probable GTPase-activating protein TBC1D17 during Rab8-mediated endocytic trafficking, such as that of transferrin receptor (TFRC/TfR); regulates Rab8 recruitment to tubules emanating from the endocytic recycling compartment. Autophagy receptor that interacts directly with both the cargo to become degraded and an autophagy modifier of the MAP1 LC3 family; targets ubiquitin-coated bacteria (xenophagy), such as cytoplasmic Salmonella enterica, and appears to function in the same pathway as SQSTM1 and CALCOCO2/NDP52. Functionally, (Microbial infection) May constitute a cellular target for various viruses, such as adenovirus E3 14.7 or Bluetongue virus, to inhibit innate immune response. During RNA virus infection, such as that of Sendai virus, negatively regulates the induction of IFNB1. The polypeptide is Optineurin (OPTN) (Homo sapiens (Human)).